We begin with the raw amino-acid sequence, 163 residues long: NADH-quinone oxidoreductase subunit I (163 aa).

4Fe-4S ferredoxin-type domains follow at residues 53 to 83 (LRRY…IEAG) and 94 to 123 (VRYD…EGPN). The [4Fe-4S] cluster site is built by cysteine 63, cysteine 66, cysteine 69, cysteine 73, cysteine 103, cysteine 106, cysteine 109, and cysteine 113.

It belongs to the complex I 23 kDa subunit family. In terms of assembly, NDH-1 is composed of 14 different subunits. Subunits NuoA, H, J, K, L, M, N constitute the membrane sector of the complex. The cofactor is [4Fe-4S] cluster.

The protein localises to the cell inner membrane. It carries out the reaction a quinone + NADH + 5 H(+)(in) = a quinol + NAD(+) + 4 H(+)(out). Functionally, NDH-1 shuttles electrons from NADH, via FMN and iron-sulfur (Fe-S) centers, to quinones in the respiratory chain. The immediate electron acceptor for the enzyme in this species is believed to be ubiquinone. Couples the redox reaction to proton translocation (for every two electrons transferred, four hydrogen ions are translocated across the cytoplasmic membrane), and thus conserves the redox energy in a proton gradient. The sequence is that of NADH-quinone oxidoreductase subunit I from Chelativorans sp. (strain BNC1).